An 85-amino-acid polypeptide reads, in one-letter code: Large ribosomal subunit protein bL27 (85 aa).

Positions methionine 1 to leucine 21 are disordered.

The protein belongs to the bacterial ribosomal protein bL27 family.

The protein is Large ribosomal subunit protein bL27 of Chlorobium chlorochromatii (strain CaD3).